A 72-amino-acid chain; its full sequence is Translation initiation factor IF-1 (72 aa).

Residues 1 to 72 (MSKEDLIEFT…SKGRITFRFK (72 aa)) enclose the S1-like domain.

Belongs to the IF-1 family. In terms of assembly, component of the 30S ribosomal translation pre-initiation complex which assembles on the 30S ribosome in the order IF-2 and IF-3, IF-1 and N-formylmethionyl-tRNA(fMet); mRNA recruitment can occur at any time during PIC assembly.

The protein resides in the cytoplasm. Functionally, one of the essential components for the initiation of protein synthesis. Stabilizes the binding of IF-2 and IF-3 on the 30S subunit to which N-formylmethionyl-tRNA(fMet) subsequently binds. Helps modulate mRNA selection, yielding the 30S pre-initiation complex (PIC). Upon addition of the 50S ribosomal subunit IF-1, IF-2 and IF-3 are released leaving the mature 70S translation initiation complex. The protein is Translation initiation factor IF-1 of Gluconobacter oxydans (strain 621H) (Gluconobacter suboxydans).